A 363-amino-acid chain; its full sequence is Histidine biosynthesis bifunctional protein HisB (363 aa).

The tract at residues 1-174 is histidinol-phosphatase; the sequence is MTQPTLFIDR…AVTNIGDRQP (174 aa). D9 functions as the Nucleophile in the catalytic mechanism. Mg(2+) contacts are provided by D9 and D11. Catalysis depends on D11, which acts as the Proton donor. 4 residues coordinate Zn(2+): C92, H94, C100, and C102. D129 contributes to the Mg(2+) binding site. The segment at 175–363 is imidazoleglycerol-phosphate dehydratase; it reads RYAEVVRKTK…NELPSSKGVL (189 aa).

This sequence in the N-terminal section; belongs to the histidinol-phosphatase family. The protein in the C-terminal section; belongs to the imidazoleglycerol-phosphate dehydratase family. It depends on Mg(2+) as a cofactor. Zn(2+) serves as cofactor.

It is found in the cytoplasm. The catalysed reaction is D-erythro-1-(imidazol-4-yl)glycerol 3-phosphate = 3-(imidazol-4-yl)-2-oxopropyl phosphate + H2O. It catalyses the reaction L-histidinol phosphate + H2O = L-histidinol + phosphate. It functions in the pathway amino-acid biosynthesis; L-histidine biosynthesis; L-histidine from 5-phospho-alpha-D-ribose 1-diphosphate: step 6/9. Its pathway is amino-acid biosynthesis; L-histidine biosynthesis; L-histidine from 5-phospho-alpha-D-ribose 1-diphosphate: step 8/9. The sequence is that of Histidine biosynthesis bifunctional protein HisB from Actinobacillus pleuropneumoniae serotype 5b (strain L20).